Consider the following 264-residue polypeptide: MQQYLDLMKHILAEGVDKSDRTGTGTRSVFGYQMRFDLSKGFPLVTTKKCHMRSIIHELLWFLKGDTNIAYLRDNKVSIWDEWADENGDLGPVYGAQWRSWPTQSGDAIDQIAQVIAQIKSQPDSRRLIVSAWNVGELDKMALAPCHAFFQFYVADGKLSCQLYQRSCDVFLGLPFNIASYALLTMMVAQQCDLALGDFVWTGGDTHLYSNHMEQTALQLSREPRPLPTMTILRKPASIFDYQFEDFELTNYDPHPHIKAPVAV.

A dUMP-binding site is contributed by Arg-21. His-51 contributes to the (6R)-5,10-methylene-5,6,7,8-tetrahydrofolate binding site. 126–127 (RR) serves as a coordination point for dUMP. Cys-146 acts as the Nucleophile in catalysis. Residues 166–169 (RSCD), Asn-177, and 207–209 (HLY) contribute to the dUMP site. Asp-169 serves as a coordination point for (6R)-5,10-methylene-5,6,7,8-tetrahydrofolate. Ala-263 contacts (6R)-5,10-methylene-5,6,7,8-tetrahydrofolate.

It belongs to the thymidylate synthase family. Bacterial-type ThyA subfamily. Homodimer.

It localises to the cytoplasm. It catalyses the reaction dUMP + (6R)-5,10-methylene-5,6,7,8-tetrahydrofolate = 7,8-dihydrofolate + dTMP. It functions in the pathway pyrimidine metabolism; dTTP biosynthesis. Its function is as follows. Catalyzes the reductive methylation of 2'-deoxyuridine-5'-monophosphate (dUMP) to 2'-deoxythymidine-5'-monophosphate (dTMP) while utilizing 5,10-methylenetetrahydrofolate (mTHF) as the methyl donor and reductant in the reaction, yielding dihydrofolate (DHF) as a by-product. This enzymatic reaction provides an intracellular de novo source of dTMP, an essential precursor for DNA biosynthesis. The sequence is that of Thymidylate synthase from Shewanella sp. (strain MR-4).